We begin with the raw amino-acid sequence, 64 residues long: Neuropeptide-like 4 (64 aa).

A signal peptide spans 1 to 18 (MFKLLVVVFAALFAAALA). Propeptides lie at residues 19–40 (VPAP…EPAP) and 63–64 (YG).

The protein resides in the secreted. This chain is Neuropeptide-like 4 (Nplp4), found in Drosophila melanogaster (Fruit fly).